Here is a 1333-residue protein sequence, read N- to C-terminus: ABC transporter ATP-binding protein/permease PDR18 (1333 aa).

Residues 13–33 (FLEGQTFGDILCLPWTIIKGI) form a helical membrane-spanning segment. The ABC transporter 1 domain occupies 30–281 (IKGIRERKNR…FENMGYLCPP (252 aa)). N-linked (GlcNAc...) asparagine glycosylation is found at Asn48, Asn144, Asn205, and Asn350. 6 helical membrane-spanning segments follow: residues 392-412 (YTVI…SLFY), 425-445 (SGVL…NISF), 474-494 (FPFR…LAGL), 499-519 (GAFF…TSLF), 534-554 (SIAG…IQLP), and 642-662 (FGIM…FTEY). 2 N-linked (GlcNAc...) asparagine glycosylation sites follow: Asn697 and Asn733. Positions 729–971 (FIWKNVSFTI…VIKYFEKNGA (243 aa)) constitute an ABC transporter 2 domain. 765–772 (GESGAGKT) contacts ATP. Residue Asn958 is glycosylated (N-linked (GlcNAc...) asparagine). The next 6 helical transmembrane spans lie at 1071–1091 (LLMI…VNAI), 1092–1112 (GLQN…PATN), 1150–1170 (PYHL…LGVF), 1178–1198 (VFYL…ALMI), 1210–1230 (VIVG…QPAS), and 1235–1255 (FWTF…LVGL). N-linked (GlcNAc...) asparagine glycosylation is present at Asn1320.

This sequence belongs to the ABC transporter superfamily. ABCG family. PDR (TC 3.A.1.205) subfamily.

It is found in the membrane. The chain is ABC transporter ATP-binding protein/permease PDR18 (PDR18) from Saccharomyces cerevisiae (strain ATCC 204508 / S288c) (Baker's yeast).